Here is an 825-residue protein sequence, read N- to C-terminus: Trimethylamine-N-oxide reductase (825 aa).

A signal peptide (tat-type signal) is located at residues Met1–Ala40. Position 187 (Ser187) interacts with Mo-bis(molybdopterin guanine dinucleotide).

This sequence belongs to the prokaryotic molybdopterin-containing oxidoreductase family. Mo-bis(molybdopterin guanine dinucleotide) is required as a cofactor. In terms of processing, predicted to be exported by the Tat system. The position of the signal peptide cleavage has not been experimentally proven.

Its subcellular location is the periplasm. It carries out the reaction trimethylamine + 2 Fe(III)-[cytochrome c] + H2O = trimethylamine N-oxide + 2 Fe(II)-[cytochrome c] + 3 H(+). Reduces trimethylamine-N-oxide (TMAO) into trimethylamine; an anaerobic reaction coupled to energy-yielding reactions. The sequence is that of Trimethylamine-N-oxide reductase (torZ) from Haemophilus influenzae (strain ATCC 51907 / DSM 11121 / KW20 / Rd).